The following is a 142-amino-acid chain: Large ribosomal subunit protein uL13 (142 aa).

Belongs to the universal ribosomal protein uL13 family. Part of the 50S ribosomal subunit.

Functionally, this protein is one of the early assembly proteins of the 50S ribosomal subunit, although it is not seen to bind rRNA by itself. It is important during the early stages of 50S assembly. The polypeptide is Large ribosomal subunit protein uL13 (Stenotrophomonas maltophilia (strain R551-3)).